Here is an 86-residue protein sequence, read N- to C-terminus: MRSHQMAAFFAVSLMMMVVLGALSAPIPSPRPIEDIYPSQLPDAGTAQIVAGDSGILPTLLAVGFDPNDRSVLKPVKNSMTQRNTA.

The signal sequence occupies residues 1–24 (MRSHQMAAFFAVSLMMMVVLGALS).

This sequence belongs to the lep1 family. Interacts at the cell wall with secreted rep1 repellent peptides.

It localises to the secreted. The protein resides in the cell wall. Functionally, core effector contributing to spore formation and tumor formation at the host plant. Modulates surface hydrophobicity promoting cell-cell or cell-surface contacts. Lep1 and rep1 interact in aerial hyphae to form a strong hydrophobic layer. Plays a crucial role in hyphal aggregation that might be a prerequisite for strong proliferation of diploid cells and for induction of the morphological changes associated with spore formation. In Mycosarcoma maydis (Corn smut fungus), this protein is Late effector protein 1.